The sequence spans 343 residues: UDP-3-O-acylglucosamine N-acyltransferase (343 aa).

The Proton acceptor role is filled by H239.

This sequence belongs to the transferase hexapeptide repeat family. LpxD subfamily. Homotrimer.

It carries out the reaction a UDP-3-O-[(3R)-3-hydroxyacyl]-alpha-D-glucosamine + a (3R)-hydroxyacyl-[ACP] = a UDP-2-N,3-O-bis[(3R)-3-hydroxyacyl]-alpha-D-glucosamine + holo-[ACP] + H(+). It functions in the pathway bacterial outer membrane biogenesis; LPS lipid A biosynthesis. Its function is as follows. Catalyzes the N-acylation of UDP-3-O-acylglucosamine using 3-hydroxyacyl-ACP as the acyl donor. Is involved in the biosynthesis of lipid A, a phosphorylated glycolipid that anchors the lipopolysaccharide to the outer membrane of the cell. In Vibrio vulnificus (strain YJ016), this protein is UDP-3-O-acylglucosamine N-acyltransferase.